The chain runs to 442 residues: PCI domain-containing protein C1105.07c (442 aa).

Residues 224-415 (VTFRYYLGRC…STLVLKKDPS (192 aa)) form the PCI domain.

The protein resides in the cytoplasm. The protein localises to the nucleus envelope. The sequence is that of PCI domain-containing protein C1105.07c from Schizosaccharomyces pombe (strain 972 / ATCC 24843) (Fission yeast).